Here is a 233-residue protein sequence, read N- to C-terminus: Small ribosomal subunit protein uS3 (233 aa).

The KH type-2 domain maps to 39–107 (VRQFLTKELS…PAQINTYEIR (69 aa)).

The protein belongs to the universal ribosomal protein uS3 family. As to quaternary structure, part of the 30S ribosomal subunit. Forms a tight complex with proteins S10 and S14.

Its function is as follows. Binds the lower part of the 30S subunit head. Binds mRNA in the 70S ribosome, positioning it for translation. This chain is Small ribosomal subunit protein uS3, found in Hamiltonella defensa subsp. Acyrthosiphon pisum (strain 5AT).